Reading from the N-terminus, the 341-residue chain is N-acetyl-gamma-glutamyl-phosphate reductase (341 aa).

Cysteine 151 is a catalytic residue.

The protein belongs to the NAGSA dehydrogenase family. Type 1 subfamily.

Its subcellular location is the cytoplasm. It carries out the reaction N-acetyl-L-glutamate 5-semialdehyde + phosphate + NADP(+) = N-acetyl-L-glutamyl 5-phosphate + NADPH + H(+). Its pathway is amino-acid biosynthesis; L-arginine biosynthesis; N(2)-acetyl-L-ornithine from L-glutamate: step 3/4. Its function is as follows. Catalyzes the NADPH-dependent reduction of N-acetyl-5-glutamyl phosphate to yield N-acetyl-L-glutamate 5-semialdehyde. The chain is N-acetyl-gamma-glutamyl-phosphate reductase from Chlorobaculum tepidum (strain ATCC 49652 / DSM 12025 / NBRC 103806 / TLS) (Chlorobium tepidum).